We begin with the raw amino-acid sequence, 311 residues long: MKVAVLGAAGGIGQALSLLLKTQLPAGTELALYDVAPVVPGVAVDLSHIPTDVKVEGFGKDDLAKALTGSDIVLIPAGVPRKPGMDRSDLFNINAGIVRNLVDSVADNCPEACLCIITNPVNTTVAIAAEALKAKGVYNKNKLFGVTTLDVIRAETFVGNLRDLNPANVHVPVIGGHSGTTILPLLSQVEGVEFTDEEVASLTTRIQNAGTEVVEAKAGGGSATLSMGQAAARFCLSLVSAMRGENVVEYTYVETNSDDAQFFSHPVRLGKNGVEEILPYGELSDFEQKAKESMLEGLRGDIKLGVEFVNN.

Residues 7 to 13 and aspartate 34 each bind NAD(+); that span reads GAAGGIG. Substrate contacts are provided by arginine 81 and arginine 87. NAD(+) contacts are provided by residues asparagine 94 and 117–119; that span reads ITN. Positions 119 and 153 each coordinate substrate. The active-site Proton acceptor is histidine 177. Residue methionine 227 coordinates NAD(+).

The protein belongs to the LDH/MDH superfamily. MDH type 1 family. In terms of assembly, homodimer.

It catalyses the reaction (S)-malate + NAD(+) = oxaloacetate + NADH + H(+). In terms of biological role, catalyzes the reversible oxidation of malate to oxaloacetate. This Pseudoalteromonas atlantica (strain T6c / ATCC BAA-1087) protein is Malate dehydrogenase.